The primary structure comprises 207 residues: Phenazine biosynthesis protein PhzD1 (207 aa).

The Proton donor role is filled by D38. Substrate is bound by residues Q78, R87, K122, and 151–155 (YAHVG).

It belongs to the isochorismatase family. In terms of assembly, homodimer.

The enzyme catalyses (2S)-2-amino-4-deoxychorismate + H2O = (5S,6S)-6-amino-5-hydroxycyclohexa-1,3-diene-1-carboxyate + pyruvate. It functions in the pathway antibiotic biosynthesis; phenazine biosynthesis. Involved in the biosynthesis of the antibiotic phenazine, a nitrogen-containing heterocyclic molecule. PhzD1 (operon phzA1B1C1E1F1G1) has a role in the biosynthesis of the phenazine during planktonic growth. Catalyzes the hydrolysis of the vinyl ether functional group of 2-amino-2-deoxyisochorismate (ADIC), yielding pyruvate and trans-2,3-dihydro-3-hydroxyanthranilic acid (DHHA). Also able to act on isochorismate, chorismate and 4-amino-4-deoxychorismate (ADC) as substrates. The sequence is that of Phenazine biosynthesis protein PhzD1 from Pseudomonas aeruginosa (strain ATCC 15692 / DSM 22644 / CIP 104116 / JCM 14847 / LMG 12228 / 1C / PRS 101 / PAO1).